The primary structure comprises 127 residues: Large ribosomal subunit protein eL32B (127 aa).

Belongs to the eukaryotic ribosomal protein eL32 family. Component of the large ribosomal subunit (LSU). Mature yeast ribosomes consist of a small (40S) and a large (60S) subunit. The 40S small subunit contains 1 molecule of ribosomal RNA (18S rRNA) and at least 33 different proteins. The large 60S subunit contains 3 rRNA molecules (25S, 5.8S and 5S rRNA) and at least 46 different proteins.

The protein resides in the cytoplasm. The protein localises to the nucleus. It localises to the nucleolus. In terms of biological role, component of the ribosome, a large ribonucleoprotein complex responsible for the synthesis of proteins in the cell. The small ribosomal subunit (SSU) binds messenger RNAs (mRNAs) and translates the encoded message by selecting cognate aminoacyl-transfer RNA (tRNA) molecules. The large subunit (LSU) contains the ribosomal catalytic site termed the peptidyl transferase center (PTC), which catalyzes the formation of peptide bonds, thereby polymerizing the amino acids delivered by tRNAs into a polypeptide chain. The nascent polypeptides leave the ribosome through a tunnel in the LSU and interact with protein factors that function in enzymatic processing, targeting, and the membrane insertion of nascent chains at the exit of the ribosomal tunnel. In Schizosaccharomyces pombe (strain 972 / ATCC 24843) (Fission yeast), this protein is Large ribosomal subunit protein eL32B (rpl3201).